Reading from the N-terminus, the 67-residue chain is Large ribosomal subunit protein bL31 (67 aa).

The Zn(2+) site is built by C16, C18, C36, and C39.

Belongs to the bacterial ribosomal protein bL31 family. Type A subfamily. In terms of assembly, part of the 50S ribosomal subunit. Zn(2+) serves as cofactor.

Functionally, binds the 23S rRNA. This chain is Large ribosomal subunit protein bL31, found in Aliarcobacter butzleri (strain RM4018) (Arcobacter butzleri).